The sequence spans 294 residues: Sperm acrosome membrane-associated protein 1 (294 aa).

Residues 1–29 (MSPRGTGCSAGLLMTVGWLLLAGLQSARG) form the signal peptide. The Extracellular segment spans residues 30 to 221 (TNVTAAVQDA…LPATDAALIF (192 aa)). N-linked (GlcNAc...) asparagine glycosylation occurs at N31. The disordered stretch occupies residues 42–70 (AHEGEGEEETENNDSETAENYAPPETEDV). The span at 46-58 (EGEEETENNDSET) shows a compositional bias: acidic residues. A helical transmembrane segment spans residues 222 to 242 (VLTIGVIICVFIIFLLIFIII). Residues 243–294 (NWAAVKAFWGAKASTPEVQSEQSSVRYKDSTSLDQLPTEMPGEDDALSEWNE) lie on the Cytoplasmic side of the membrane. Phosphoserine is present on S256. Over residues 258 to 267 (PEVQSEQSSV) the composition is skewed to polar residues. The disordered stretch occupies residues 258–294 (PEVQSEQSSVRYKDSTSLDQLPTEMPGEDDALSEWNE). Position 269 is a phosphotyrosine (Y269). A compositionally biased stretch (acidic residues) spans 283 to 294 (PGEDDALSEWNE). A Phosphoserine modification is found at S290.

As to quaternary structure, interacts with CYLC1; the interaction may be relevant for proper acrosome attachment to the nuclear envelope. Post-translationally, N-glycosylated. Testis specific.

Its subcellular location is the cytoplasmic vesicle. It localises to the secretory vesicle. It is found in the acrosome inner membrane. In terms of biological role, plays a role in acrosome formation and establishment of normal sperm morphology during spermatogenesis. Important for male fertility. The sequence is that of Sperm acrosome membrane-associated protein 1 (SPACA1) from Homo sapiens (Human).